The chain runs to 362 residues: G-prodeshotein coupled receptor 4 (362 aa).

Over 1-8 (MGNHTWEG) the chain is Extracellular. Asn-3 carries an N-linked (GlcNAc...) asparagine glycan. The chain crosses the membrane as a helical span at residues 9–45 (CHVDSRVDHLFPPSLYIFVIGVGLPTNCLALWAAYRQ). Cystine bridges form between Cys-9-Cys-258 and Cys-90-Cys-168. The Cytoplasmic portion of the chain corresponds to 46–49 (VQQR). The helical transmembrane segment at 50 to 80 (NELGVYLMNLSIADLLYICTLPLWVDYFLHH) threads the bilayer. At 81-85 (DNWIH) the chain is on the extracellular side. A helical membrane pass occupies residues 86-121 (GPGSCKLFGFIFYTNIYISIAFLCCISVDRYLAVAH). At 122–129 (PLRFARLR) the chain is on the cytoplasmic side. Residues 130 to 156 (RVKTAVAVSSVVWATELGANSAPLFHD) form a helical membrane-spanning segment. Over 157–172 (ELFRDRYNHTFCFEKF) the chain is Extracellular. Residues 157 to 172 (ELFRDRYNHTFCFEKF) form an extracellular loop 2 (ECL2) region. Asn-164 is a glycosylation site (N-linked (GlcNAc...) asparagine). A helical membrane pass occupies residues 173–210 (PMEGWVAWMNLYRVFVGFLFPWALMLLSYRGILRAVRG). Residues 211–214 (SVST) are Cytoplasmic-facing. A helical transmembrane segment spans residues 215 to 250 (ERQEKAKIKRLALSLIAIVLVCFAPYHVLLLSRSAI). At 251–260 (YLGRPWDCGF) the chain is on the extracellular side. A helical membrane pass occupies residues 261–289 (EERVFSAYHSSLAFTSLNCVADPILYCLV). The Cytoplasmic segment spans residues 290-362 (NEGARSDVAK…VQLKMLPPAQ (73 aa)). A disordered region spans residues 335 to 362 (AKAMTGSWAATPPSQGDQVQLKMLPPAQ).

It belongs to the G-protein coupled receptor 1 family.

The protein resides in the cell membrane. Its activity is regulated as follows. Activated by a network of residues that connects an extracellular-facing cavity to Glu-145, a conserved charged residue buried in the transmembrane core of the receptor. Protonation likely drives conformational changes in extracellular loop 2 (ECL2), which stabilizes movement of transmembrane 3 (TM3) and a series of rearrangements that connect the extracellular-facing cavity to Glu-145, a residue only conserved in proton-sensing G-protein coupled receptors. Proton-sensing G-protein coupled receptor activated by extracellular pH, which is required to monitor pH changes and generate adaptive reactions. Activated by an optimal pH of 6.8-7.2. Ligand binding causes a conformation change that triggers signaling via guanine nucleotide-binding proteins (G proteins) and modulates the activity of downstream effectors, such as adenylate cyclase. GPR4 is mainly coupled to G(s) G proteins and mediates activation of adenylate cyclase activity. May also couple with G(q) and G(12)/G(13) G proteins. Acts as a key regulator of respiratory sensitivity to CO2/H(+) in brain retrotrapezoid nucleus neurons: acts by mediating detection of protons generated by the formation of carbonic acid in the blood, an important mechanism to impulse to breathe. Also acts as a regulator of acid secretion in the kidney collecting duct by maintaining acid-base homeostasis in the kidney. Acidosis-induced GPR4 activation increases paracellular gap formation and permeability of vascular endothelial cells, possibly through the G(12)/G(13)/Rho GTPase signaling pathway. This is G-prodeshotein coupled receptor 4 from Homo sapiens (Human).